The sequence spans 156 residues: Small ribosomal subunit protein uS7 (156 aa).

This sequence belongs to the universal ribosomal protein uS7 family. As to quaternary structure, part of the 30S ribosomal subunit. Contacts proteins S9 and S11.

In terms of biological role, one of the primary rRNA binding proteins, it binds directly to 16S rRNA where it nucleates assembly of the head domain of the 30S subunit. Is located at the subunit interface close to the decoding center, probably blocks exit of the E-site tRNA. The chain is Small ribosomal subunit protein uS7 from Anaeromyxobacter sp. (strain Fw109-5).